The following is a 1135-amino-acid chain: Exportin-5 (1135 aa).

Residues 32-117 (SQVFLEEIKT…KEKLVTILVD (86 aa)) enclose the Importin N-terminal domain. Residues 630 to 631 (TE) are pre-siRNA binding.

It belongs to the exportin family. In terms of assembly, found in a nuclear export complex with RanGTP, exportin and pre-miRNA.

The protein resides in the nucleus. Its subcellular location is the cytoplasm. In terms of biological role, mediates the nuclear export of proteins bearing a double-stranded RNA binding domain (dsRBD) and double-stranded RNAs (cargos). Functionally, mediates the nuclear export of micro-RNA precursors, which form short hairpins. The chain is Exportin-5 (xpo5) from Dictyostelium discoideum (Social amoeba).